The sequence spans 146 residues: uncharacterized protein (146 aa).

The 140-residue stretch at 7 to 146 (LEINYKTDEL…EGHDVLLWKP (140 aa)) folds into the N-acetyltransferase domain.

This is an uncharacterized protein from Staphylococcus aureus (strain COL).